Here is a 121-residue protein sequence, read N- to C-terminus: Protein yippee (121 aa).

The Yippee domain occupies 13 to 110 (KLFNCAQCHT…LEYALITEAE (98 aa)). Residues cysteine 17, cysteine 20, cysteine 73, and cysteine 76 each coordinate Zn(2+).

The protein belongs to the yippee family. In terms of assembly, interacts with hemolin.

This Drosophila melanogaster (Fruit fly) protein is Protein yippee.